The primary structure comprises 373 residues: 1-deoxy-D-xylulose 5-phosphate reductoisomerase (373 aa).

T10, G11, S12, I13, R37, and N112 together coordinate NADPH. Residue K113 participates in 1-deoxy-D-xylulose 5-phosphate binding. Position 114 (E114) interacts with NADPH. D134 contributes to the Mn(2+) binding site. 1-deoxy-D-xylulose 5-phosphate is bound by residues S135, E136, S160, and H183. E136 contacts Mn(2+). G189 serves as a coordination point for NADPH. 1-deoxy-D-xylulose 5-phosphate-binding residues include S196, N201, K202, and E205. Residue E205 coordinates Mn(2+).

It belongs to the DXR family. Mg(2+) is required as a cofactor. Mn(2+) serves as cofactor.

It carries out the reaction 2-C-methyl-D-erythritol 4-phosphate + NADP(+) = 1-deoxy-D-xylulose 5-phosphate + NADPH + H(+). It participates in isoprenoid biosynthesis; isopentenyl diphosphate biosynthesis via DXP pathway; isopentenyl diphosphate from 1-deoxy-D-xylulose 5-phosphate: step 1/6. Functionally, catalyzes the NADPH-dependent rearrangement and reduction of 1-deoxy-D-xylulose-5-phosphate (DXP) to 2-C-methyl-D-erythritol 4-phosphate (MEP). The sequence is that of 1-deoxy-D-xylulose 5-phosphate reductoisomerase from Persephonella marina (strain DSM 14350 / EX-H1).